We begin with the raw amino-acid sequence, 336 residues long: Dihydroorotate dehydrogenase (quinone) (336 aa).

Residues 62–66 (AGLDK) and Thr86 contribute to the FMN site. Residue Lys66 participates in substrate binding. 111–115 (NRMGF) serves as a coordination point for substrate. FMN-binding residues include Asn139 and Asn172. Asn172 provides a ligand contact to substrate. The active-site Nucleophile is the Ser175. Asn177 lines the substrate pocket. The FMN site is built by Lys217 and Thr245. 246 to 247 (NT) contacts substrate. Residues Gly268, Gly297, and 318-319 (YS) contribute to the FMN site.

The protein belongs to the dihydroorotate dehydrogenase family. Type 2 subfamily. As to quaternary structure, monomer. It depends on FMN as a cofactor.

Its subcellular location is the cell membrane. The catalysed reaction is (S)-dihydroorotate + a quinone = orotate + a quinol. Its pathway is pyrimidine metabolism; UMP biosynthesis via de novo pathway; orotate from (S)-dihydroorotate (quinone route): step 1/1. Catalyzes the conversion of dihydroorotate to orotate with quinone as electron acceptor. The protein is Dihydroorotate dehydrogenase (quinone) of Edwardsiella ictaluri (strain 93-146).